The following is a 79-amino-acid chain: Protein RALF-like 35 (79 aa).

A signal peptide spans 1–29; it reads MAAHKMSLTSLFFVSIVIVLSLFSGFGEG. Disulfide bonds link cysteine 45–cysteine 52 and cysteine 66–cysteine 72. N-linked (GlcNAc...) asparagine glycosylation occurs at asparagine 68.

This sequence belongs to the plant rapid alkalinization factor (RALF) family.

The protein resides in the secreted. Its function is as follows. Cell signaling peptide that may regulate plant stress, growth, and development. Mediates a rapid alkalinization of extracellular space by mediating a transient increase in the cytoplasmic Ca(2+) concentration leading to a calcium-dependent signaling events through a cell surface receptor and a concomitant activation of some intracellular mitogen-activated protein kinases. In Arabidopsis thaliana (Mouse-ear cress), this protein is Protein RALF-like 35.